The sequence spans 498 residues: Archaemetzincin-1 (498 aa).

Histidine 261 provides a ligand contact to Zn(2+). Glutamate 262 (proton acceptor) is an active-site residue. Zn(2+) contacts are provided by histidine 265, cysteine 272, cysteine 277, cysteine 296, and cysteine 299. Residues 332–381 (QEAGEPSVWEDTPPASADSGMCCESDSEPGTSVSEPLTPDAGSHTFASGP) are disordered.

The protein belongs to the peptidase M54 family. Requires Zn(2+) as cofactor.

Probable zinc metalloprotease. The sequence is that of Archaemetzincin-1 (AMZ1) from Homo sapiens (Human).